We begin with the raw amino-acid sequence, 993 residues long: Desmoglein-3 (993 aa).

A signal peptide spans 1–23 (MTWLLFRTSGALAILMVLILVHG). Positions 24–48 (ELRIETKGQHGEDETAIQGRRRYKR) are excised as a propeptide. Cadherin domains are found at residues 48–156 (REWV…APVF), 157–266 (SQSI…FPMF), 267–386 (KESQ…HPAS), and 383–494 (HPAS…CPTV). The Extracellular segment spans residues 49–617 (EWVKFAKPCR…GKRPSGRLGS (569 aa)). N-linked (GlcNAc...) asparagine glycosylation is found at asparagine 109 and asparagine 179. N-linked (GlcNAc...) asparagine glycans are attached at residues asparagine 458 and asparagine 544. The chain crosses the membrane as a helical span at residues 618–638 (AAIGLLLLGLLLLLLAPLLLL). Over 639–993 (TCDYGVGPIG…CTEDPCSRLI (355 aa)) the chain is Cytoplasmic. Positions 641–713 (DYGVGPIGGV…NTYAGGTVVE (73 aa)) are required for interaction with CTNND1 and localization at cell-cell junctions. Desmoglein repeat repeat units follow at residues 903–929 (LSAS…MVTE) and 930–960 (TYSA…ERVI).

As to quaternary structure, homodimer. Part of a complex that contains DSG3, PKP1, YAP1 and YWHAG; the complex is required for localization of DSG3 and YAP1 to the cell membrane in keratinocytes. Interacts with PKP2. Interacts with CTNND1; the interaction facilitates DSG3 localization and retention at cell-cell junctions. Interacts with CDH1; the interaction is required for CDH1 localization to developing adherens junctions. Interacts with RAC1; the interaction is required for DSG3 translocation to cell-cell junctions, organization of cortical F-actin bundles and actin anchoring at cell-cell junctions. Interacts with DSC3; the interaction may limit the interaction of DSC3 with p38MAPK family members and therefore repress p38MAPK signaling activation.

It is found in the cell membrane. The protein resides in the cell junction. The protein localises to the desmosome. Its subcellular location is the cytoplasm. It localises to the tight junction. In terms of biological role, a component of desmosome cell-cell junctions which are required for positive regulation of cellular adhesion. Required for adherens and desmosome junction assembly in response to mechanical force in keratinocytes. Required for desmosome-mediated cell-cell adhesion of cells surrounding the telogen hair club and the basal layer of the outer root sheath epithelium, consequently is essential for the anchoring of telogen hairs in the hair follicle. Required for the maintenance of the epithelial barrier via promoting desmosome-mediated intercellular attachment of suprabasal epithelium to basal cells. May play a role in the protein stability of the desmosome plaque components DSP, JUP, PKP1, PKP2 and PKP3. Required for YAP1 localization at the plasma membrane in keratinocytes in response to mechanical strain, via the formation of an interaction complex composed of DSG3, PKP1 and YWHAG. May also be involved in the positive regulation of YAP1 target gene transcription and as a result cell proliferation. Positively regulates cellular contractility and cell junction formation via organization of cortical F-actin bundles and anchoring of actin to tight junctions, in conjunction with RAC1. The cytoplasmic pool of DSG3 is required for the localization of CDH1 and CTNNB1 at developing adherens junctions, potentially via modulation of SRC activity. Inhibits keratinocyte migration via suppression of p38MAPK signaling, may therefore play a role in moderating wound healing. The sequence is that of Desmoglein-3 (DSG3) from Canis lupus familiaris (Dog).